We begin with the raw amino-acid sequence, 465 residues long: Branched-chain amino acid permease BcaP (465 aa).

Transmembrane regions (helical) follow at residues Phe-28–Val-48, Gly-56–Ala-76, Ala-88–Ala-110, Asp-149–Phe-169, Ile-181–Ile-201, Phe-219–Phe-239, Gly-259–Val-279, Val-309–Gly-329, Val-359–Ala-379, Gln-380–Leu-400, Pro-416–Leu-436, and Val-438–Tyr-458.

This sequence belongs to the amino acid-polyamine-organocation (APC) superfamily.

It localises to the cell membrane. Its function is as follows. Branched-chain amino acid transport system that specifically transports branched-chain amino acids (BCAAs) (isoleucine, leucine and valine) and, to a lesser extent, methionine. Important for CodY-mediated regulation, and required for optimal growth in media containing free amino acids as the only amino acid source. The chain is Branched-chain amino acid permease BcaP from Lactococcus lactis subsp. cremoris (strain MG1363).